Consider the following 71-residue polypeptide: Small, acid-soluble spore protein 2 (71 aa).

Belongs to the alpha/beta-type SASP family.

SASP are bound to spore DNA. They are double-stranded DNA-binding proteins that cause DNA to change to an a-like conformation. They protect the DNA backbone from chemical and enzymatic cleavage and are thus involved in dormant spore's high resistance to UV light. The chain is Small, acid-soluble spore protein 2 from Bacillus subtilis.